Consider the following 631-residue polypeptide: uncharacterized protein (631 aa).

Positions 1–19 are enriched in polar residues; sequence MSKMGSSSMGELQDGITQE. Residues 1 to 92 are disordered; it reads MSKMGSSSMG…EENYPRLQTT (92 aa). Residues 67 to 76 show a composition bias toward basic residues; that stretch reads KKKKKKKLKK. The Exonuclease domain occupies 277-426; it reads LAIDCEMVRT…EDALACVDLL (150 aa). A compositionally biased stretch (polar residues) spans 517 to 526; it reads ANRNTKQENN. Residues 517–540 are disordered; the sequence is ANRNTKQENNSDTDTENDSVEEDQ. Acidic residues predominate over residues 527–540; that stretch reads SDTDTENDSVEEDQ.

Belongs to the REXO1/REXO3 family.

It is found in the nucleus. This is an uncharacterized protein from Schizosaccharomyces pombe (strain 972 / ATCC 24843) (Fission yeast).